Consider the following 995-residue polypeptide: Probable copper-transporting ATPase HMA5 (995 aa).

Topologically, residues 1 to 299 are cytoplasmic; that stretch reads MATKLLSLTC…QGEIKQYYKS (299 aa). 2 consecutive HMA domains span residues 51–117 and 129–195; these read SRAV…FEAS and QVCR…FEAV. Cu(+) contacts are provided by Cys62, Cys65, Cys140, and Cys143. The HMA 3; degenerate domain maps to 204-270; that stretch reads SKIDLKIDGE…VIESTVFGHS (67 aa). A helical transmembrane segment spans residues 300-321; that stretch reads FLWSLVFTVPVFLTAMVFMYIP. At 322 to 340 the chain is on the extracellular side; the sequence is GIKDLLMFKVINMLTVGEI. Residues 341–360 form a helical membrane-spanning segment; it reads IRCVLATPVQFVIGWRFYTG. The Cytoplasmic segment spans residues 361–367; that stretch reads SYKALRR. The chain crosses the membrane as a helical span at residues 368–388; sequence GSANMDVLIALGTNAAYFYSL. At 389–406 the chain is on the extracellular side; sequence YTVLRAATSPDFKGVDFF. A helical membrane pass occupies residues 407–427; it reads ETSAMLISFIILGKYLEVMAK. Residues 428 to 561 are Cytoplasmic-facing; sequence GKTSQAIAKL…KAPVQKLADR (134 aa). The helical transmembrane segment at 562-584 threads the bilayer; the sequence is ISKFFVPLVIFLSFSTWLAWFLA. At 585–605 the chain is on the extracellular side; it reads GKLHWYPESWIPSSMDSFELA. The chain crosses the membrane as a helical span at residues 606–623; it reads LQFGISVMVIACPCALGL. Residues 624–920 lie on the Cytoplasmic side of the membrane; the sequence is ATPTAVMVGT…DLSRKTFSRI (297 aa). Asp661 acts as the 4-aspartylphosphate intermediate in catalysis. Residues Asp866 and Asp870 each contribute to the Mg(2+) site. The helical transmembrane segment at 921 to 940 threads the bilayer; sequence RLNYVWALGYNLMGIPIAAG. Residues 941-952 lie on the Extracellular side of the membrane; sequence VLFPGTRFRLPP. The chain crosses the membrane as a helical span at residues 953–971; the sequence is WIAGAAMAASSVSVVCCSL. Over 972–995 the chain is Cytoplasmic; the sequence is LLKNYKRPKKLDHLEIREIQVERV.

The protein belongs to the cation transport ATPase (P-type) (TC 3.A.3) family. Type IB subfamily. As to quaternary structure, interacts with ATX1. Expressed in roots and flowers.

The protein resides in the membrane. It carries out the reaction Cu(+)(in) + ATP + H2O = Cu(+)(out) + ADP + phosphate + H(+). In terms of biological role, involved in copper import into the cell. May play a role in copper detoxification in roots. This Arabidopsis thaliana (Mouse-ear cress) protein is Probable copper-transporting ATPase HMA5 (HMA5).